A 127-amino-acid chain; its full sequence is Calcium-binding protein PBP1 (127 aa).

Residues 1–18 (MASPKSSTRPNQENQEPQ) show a composition bias toward polar residues. Positions 1 to 20 (MASPKSSTRPNQENQEPQFQ) are disordered. The EF-hand domain maps to 72–107 (LTDDDVRYMINEGDFDRDGALNQMEFCVLMFRLSPE). Ca(2+) is bound by residues D85, D87, D89, and E96.

As to quaternary structure, interacts with PID.

Functionally, potential calcium sensor that binds calcium in vitro. The protein is Calcium-binding protein PBP1 (PBP1) of Arabidopsis thaliana (Mouse-ear cress).